The chain runs to 352 residues: Uroporphyrinogen decarboxylase (352 aa).

Residues 26 to 30, Asp-76, Tyr-153, Ser-208, and His-323 each bind substrate; that span reads RQAGR.

Belongs to the uroporphyrinogen decarboxylase family. In terms of assembly, homodimer.

The protein resides in the cytoplasm. The enzyme catalyses uroporphyrinogen III + 4 H(+) = coproporphyrinogen III + 4 CO2. It participates in porphyrin-containing compound metabolism; protoporphyrin-IX biosynthesis; coproporphyrinogen-III from 5-aminolevulinate: step 4/4. Functionally, catalyzes the decarboxylation of four acetate groups of uroporphyrinogen-III to yield coproporphyrinogen-III. The chain is Uroporphyrinogen decarboxylase from Synechococcus sp. (strain CC9902).